The primary structure comprises 283 residues: Lysozyme-like protein 7 (283 aa).

Residues 1-18 (MAHKSIVIFSVLAVLCHS) form the signal peptide. The Ch-type lysozyme domain maps to 53 to 273 (YAYALDIYVQ…AVEEDGKIYA (221 aa)).

The protein belongs to the glycosyl hydrolase 25 family. As to expression, expressed in intestine. Expressed in rectal gland cells and head neurons.

Its function is as follows. Plays a role in resistance to Gram-positive bacteria B.thuringiensis and M.nematophilum and Gram-negative bacteria S.boydii or S.flexneri infection and to fungus C.neoformans infection. Plays a role in susceptibility to Gram-negative bacterium S.typhimurium infection. The polypeptide is Lysozyme-like protein 7 (Caenorhabditis elegans).